The following is a 1048-amino-acid chain: NACHT, LRR and PYD domains-containing protein 8 (1048 aa).

Residues 1–23 (MSDVNPPSDTPIPFSSSSTHSSH) form a disordered region. Residues 11–23 (PIPFSSSSTHSSH) show a composition bias toward low complexity. Positions 33-131 (PGSPCENGVM…NAILPTLEPE (99 aa)) constitute a Pyrin domain. The NACHT domain occupies 204–527 (KTVAIQGAPG…FYVLCFPQRL (324 aa)). ATP is bound at residue 210-217 (GAPGIGKT). LRR repeat units follow at residues 815-838 (NGHL…YLSV), 839-861 (AQLE…SLAS), 866-890 (SKML…IWNA), 923-950 (NKTL…ALKN), and 980-1007 (NQHL…AFSS). The interval 1029-1048 (PTPHPPDFTGKSDCLSQINP) is disordered.

The protein belongs to the NLRP family.

Its subcellular location is the cytoplasm. Functionally, involved in inflammation. The chain is NACHT, LRR and PYD domains-containing protein 8 (NLRP8) from Homo sapiens (Human).